A 783-amino-acid polypeptide reads, in one-letter code: Endonuclease MutS2 (783 aa).

328–335 lines the ATP pocket; it reads GPNTGGKT. The region spanning 708–783 is the Smr domain; the sequence is LDLRGKRYEE…GSGCTIATLG (76 aa).

It belongs to the DNA mismatch repair MutS family. MutS2 subfamily. As to quaternary structure, homodimer. Binds to stalled ribosomes, contacting rRNA.

Endonuclease that is involved in the suppression of homologous recombination and thus may have a key role in the control of bacterial genetic diversity. Its function is as follows. Acts as a ribosome collision sensor, splitting the ribosome into its 2 subunits. Detects stalled/collided 70S ribosomes which it binds and splits by an ATP-hydrolysis driven conformational change. Acts upstream of the ribosome quality control system (RQC), a ribosome-associated complex that mediates the extraction of incompletely synthesized nascent chains from stalled ribosomes and their subsequent degradation. Probably generates substrates for RQC. The chain is Endonuclease MutS2 from Streptococcus thermophilus (strain CNRZ 1066).